Reading from the N-terminus, the 215-residue chain is 3-demethoxyubiquinol 3-hydroxylase (215 aa).

Fe cation contacts are provided by Glu-64, Glu-94, His-97, Glu-146, Glu-178, and His-181.

This sequence belongs to the COQ7 family. The cofactor is Fe cation.

The protein resides in the cell membrane. It carries out the reaction a 5-methoxy-2-methyl-3-(all-trans-polyprenyl)benzene-1,4-diol + AH2 + O2 = a 3-demethylubiquinol + A + H2O. It participates in cofactor biosynthesis; ubiquinone biosynthesis. Catalyzes the hydroxylation of 2-nonaprenyl-3-methyl-6-methoxy-1,4-benzoquinol during ubiquinone biosynthesis. This chain is 3-demethoxyubiquinol 3-hydroxylase, found in Pseudomonas fluorescens (strain Pf0-1).